Reading from the N-terminus, the 534-residue chain is Pentatricopeptide repeat-containing protein At5g50990 (534 aa).

6 PPR repeats span residues 128–158 (NVITWNLMIGGYVRNVQYEEALKALKNMLSF), 164–198 (NKFSFASSLAACARLGDLHHAKWVHSLMIDSGIEL), 199–229 (NAILSSALVDVYAKCGDIGTSREVFYSVKRN), 230–264 (DVSIWNAMITGFATHGLATEAIRVFSEMEAEHVSP), 265–295 (DSITFLGLLTTCSHCGLLEEGKEYFGLMSRR), and 301–331 (KLEHYGAMVDLLGRAGRVKEAYELIESMPIE). Positions 336-408 (IWRSLLSSSR…AKGKSWLEFG (73 aa)) are type E motif. Positions 409–439 (GMIHRFKAGDTSHIETKAIYKVLEGLIQKTK) are type E(+) motif. The type DYW motif stretch occupies residues 440 to 534 (SQGFVSDTDL…DGLCSCRDYW (95 aa)).

The protein belongs to the PPR family. PCMP-H subfamily.

In Arabidopsis thaliana (Mouse-ear cress), this protein is Pentatricopeptide repeat-containing protein At5g50990 (PCMP-H59).